The following is a 688-amino-acid chain: Complement C1s subcomponent (688 aa).

The N-terminal stretch at 1-15 is a signal peptide; the sequence is MWCIVLFSLLAWVYA. The CUB 1 domain occupies 16–130; that stretch reads EPTMYGEILS…TGFAAYYVAT (115 aa). Positions 60, 68, 113, 131, 132, and 134 each coordinate Ca(2+). Cysteine 65 and cysteine 83 form a disulfide bridge. The region spanning 131 to 172 is the EGF-like; calcium-binding domain; it reads DINECTDFVDVPCSHFCNNFIGGYFCSCPPEYFLHDDMKNCG. Intrachain disulfides connect cysteine 135-cysteine 147, cysteine 143-cysteine 156, and cysteine 158-cysteine 171. Positions 149, 150, and 153 each coordinate Ca(2+). Asparagine 149 carries the post-translational modification (3R)-3-hydroxyasparagine. The N-linked (GlcNAc...) asparagine glycan is linked to asparagine 174. A disulfide bridge connects residues cysteine 175 and cysteine 202. The CUB 2 domain occupies 175 to 290; sequence CSGDVFTALI…KGWKLRYHGD (116 aa). Residues glutamate 226, aspartate 236, aspartate 275, glycine 278, and glutamine 279 each coordinate Ca(2+). Cysteine 234 and cysteine 251 are oxidised to a cystine. Sushi domains are found at residues 292 to 356 and 357 to 423; these read MPCP…KCQP and VDCG…KCVP. Disulfide bonds link cysteine 294–cysteine 341, cysteine 321–cysteine 354, cysteine 359–cysteine 403, cysteine 386–cysteine 421, cysteine 425–cysteine 549, cysteine 595–cysteine 618, and cysteine 628–cysteine 659. Asparagine 406 carries an N-linked (GlcNAc...) asparagine glycan. The 243-residue stretch at 438-680 folds into the Peptidase S1 domain; it reads IIGGSDADIK…YVDWIMKTMQ (243 aa). Catalysis depends on charge relay system residues histidine 475 and aspartate 529. Serine 632 functions as the Charge relay system in the catalytic mechanism.

It belongs to the peptidase S1 family. As to quaternary structure, core component of the complement C1 complex, a calcium-dependent complex composed of 1 molecule of the C1Q subcomplex, 2 molecules of C1R and 2 molecules of C1S. The C1Q subcomplex is composed 18 subunits: 3 chains of C1QA, C1QB, and C1QC trimerize to form 6 collagen-like triple helices connected to six globular ligand-recognition modules. In terms of processing, cleaved and activated by C1R to generate Complement C1s subcomponent heavy and light chains. The iron and 2-oxoglutarate dependent 3-hydroxylation of aspartate and asparagine is (R) stereospecific within EGF domains.

The protein localises to the secreted. It localises to the cell surface. The catalysed reaction is Cleavage of Arg-|-Ala bond in complement component C4 to form C4a and C4b, and Lys(or Arg)-|-Lys bond in complement component C2 to form C2a and C2b: the 'classical' pathway C3 convertase.. Cleaved and activated by C1R. Immunoglobulin-binding promotes autoactivation of C1R, which results in the cleavage of the Arg-Ile bond in the catalytic domain. Inhibited by C1 inhibitor (SERPING1). In terms of biological role, component of the complement C1 complex, a multiprotein complex that initiates the classical pathway of the complement system, a cascade of proteins that leads to phagocytosis and breakdown of pathogens and signaling that strengthens the adaptive immune system. C1S is activated following association of the C1 complex with immunoglobulins (IgG or IgM) complexed with antigens to form antigen-antibody complexes on the surface of pathogens. C1S is cleaved and activated by C1R to generate C1s subcomponent heavy and light chains. C1s subcomponent light chain then cleaves and activates C2 and C4, the next components of the classical complement pathway. Functionally, serine protease component of the complement C1 complex, which catalyzes cleavage and activation of C2 and C4, the next components of the classical complement pathway. Also able to cleave C1 inhibitor (SERPING1) in vitro; additional evidence is however required to confirm this result in vivo. Also cleaves IGFBP5 and thereby inhibits the trophic effects of IGF1. This is Complement C1s subcomponent from Homo sapiens (Human).